The chain runs to 157 residues: MSSEEALARLAAEEQQLQFTLFNPDTAWQLGCALRQEAGRRGLHVTIDIQFAGQTLFHCAMPGTSPDNAEWIRRKRNVVLRFQRSSYAMGMRLTLRNTTLEAFYGLDPADYASQGGSFPLRIVNCGCVGAISVSGAPQLDDHLLVSEVIARFLGINQ.

The protein belongs to the UPF0303 family.

This Edwardsiella ictaluri (strain 93-146) protein is UPF0303 protein NT01EI_1570.